Reading from the N-terminus, the 249-residue chain is Type III pantothenate kinase (249 aa).

Position 6-13 (6-13) interacts with ATP; it reads DCGNSFIK. Residues Tyr-93 and 100–103 contribute to the substrate site; that span reads GMDR. Catalysis depends on Asp-102, which acts as the Proton acceptor. K(+) is bound at residue Asp-122. Thr-125 serves as a coordination point for ATP. Thr-181 is a substrate binding site.

The protein belongs to the type III pantothenate kinase family. Homodimer. NH4(+) is required as a cofactor. The cofactor is K(+).

The protein resides in the cytoplasm. The catalysed reaction is (R)-pantothenate + ATP = (R)-4'-phosphopantothenate + ADP + H(+). The protein operates within cofactor biosynthesis; coenzyme A biosynthesis; CoA from (R)-pantothenate: step 1/5. Functionally, catalyzes the phosphorylation of pantothenate (Pan), the first step in CoA biosynthesis. This Pseudomonas putida (strain ATCC 700007 / DSM 6899 / JCM 31910 / BCRC 17059 / LMG 24140 / F1) protein is Type III pantothenate kinase.